Here is a 171-residue protein sequence, read N- to C-terminus: uncharacterized protein (171 aa).

A disordered region spans residues 56–83; that stretch reads TVGVNKNAKNGPTQSQTRSGSAGAQARM. Positions 57 to 77 are enriched in polar residues; sequence VGVNKNAKNGPTQSQTRSGSA. The region spanning 113-170 is the J domain; sequence KAFETLGLGASATTADIKAAYKDLVKKHHPDANGGDRGSEERFRAVIQAYQLLKQAGF.

This is an uncharacterized protein from Sinorhizobium sp.